A 590-amino-acid polypeptide reads, in one-letter code: Acetolactate synthase large subunit (590 aa).

Position 61 (Glu61) interacts with thiamine diphosphate. FAD-binding positions include Arg163, 271-292, and 314-333; these read HGTAYANFAVSECDLLIALGAR and DIDPAEVGKNRIPQVAIVGD. Positions 405–484 are thiamine pyrophosphate binding; the sequence is QHQMWSAQFL…IKIVIINNRW (80 aa). Residues Asp455 and Asn482 each coordinate Mg(2+).

The protein belongs to the TPP enzyme family. Dimer of large and small chains. Requires Mg(2+) as cofactor. Thiamine diphosphate is required as a cofactor.

The protein resides in the plastid. The protein localises to the chloroplast. The enzyme catalyses 2 pyruvate + H(+) = (2S)-2-acetolactate + CO2. The protein operates within amino-acid biosynthesis; L-isoleucine biosynthesis; L-isoleucine from 2-oxobutanoate: step 1/4. It functions in the pathway amino-acid biosynthesis; L-valine biosynthesis; L-valine from pyruvate: step 1/4. The polypeptide is Acetolactate synthase large subunit (ilvB) (Porphyra purpurea (Red seaweed)).